The primary structure comprises 138 residues: Acidic phospholipase A2 AplTX-I (138 aa).

A signal peptide spans 1–16 (MRTLWIMAVLLLGVEG). 7 cysteine pairs are disulfide-bonded: cysteine 42–cysteine 131, cysteine 44–cysteine 60, cysteine 59–cysteine 111, cysteine 65–cysteine 138, cysteine 66–cysteine 104, cysteine 73–cysteine 97, and cysteine 91–cysteine 102. Ca(2+) contacts are provided by tyrosine 43, glycine 45, and glycine 47. Histidine 63 is an active-site residue. Aspartate 64 provides a ligand contact to Ca(2+). The active site involves aspartate 105.

In terms of assembly, monomer. Ca(2+) is required as a cofactor. As to expression, expressed by the venom gland.

The protein localises to the secreted. It catalyses the reaction a 1,2-diacyl-sn-glycero-3-phosphocholine + H2O = a 1-acyl-sn-glycero-3-phosphocholine + a fatty acid + H(+). With respect to regulation, inhibited by divalent cations different from calcium ions (cadmium, magnesium, manganese, zinc), since they act as competitive antagonists of this cofactor. In terms of biological role, snake venom phospholipase A2 (PLA2) that triggers a high neuromuscular toxicity in chick biventer cervicis preparations, but not in mouse phrenic nerve-diaphragm (PND) preparations, suggesting a selective neurotoxin activity towards birds. Does not induce myotoxic, coagulant, anticoagulant, edema, and antibacterial activities. PLA2 catalyzes the calcium-dependent hydrolysis of the 2-acyl groups in 3-sn-phosphoglycerides. This Agkistrodon piscivorus leucostoma (Western cottonmouth) protein is Acidic phospholipase A2 AplTX-I.